The following is a 437-amino-acid chain: Ribulose bisphosphate carboxylase-like protein (437 aa).

K176 acts as the Proton acceptor in catalysis. Residues K202, D204, and E205 each coordinate Mg(2+). K202 is modified (N6-carboxylysine). The active-site Proton acceptor is the H293.

This sequence belongs to the RuBisCO large chain family. Type IV subfamily. As to quaternary structure, homodimer. Mg(2+) serves as cofactor.

In terms of biological role, may be involved in sulfur metabolism and oxidative stress response. Does not show RuBisCO activity. The sequence is that of Ribulose bisphosphate carboxylase-like protein from Archaeoglobus fulgidus (strain ATCC 49558 / DSM 4304 / JCM 9628 / NBRC 100126 / VC-16).